A 202-amino-acid chain; its full sequence is Probable adenylyl-sulfate kinase (202 aa).

36–43 contacts ATP; that stretch reads GLSGSGKS. Serine 110 (phosphoserine intermediate) is an active-site residue.

It belongs to the APS kinase family.

The catalysed reaction is adenosine 5'-phosphosulfate + ATP = 3'-phosphoadenylyl sulfate + ADP + H(+). The protein operates within sulfur metabolism; hydrogen sulfide biosynthesis; sulfite from sulfate: step 2/3. In terms of biological role, catalyzes the synthesis of activated sulfate. The protein is Probable adenylyl-sulfate kinase of Halalkalibacterium halodurans (strain ATCC BAA-125 / DSM 18197 / FERM 7344 / JCM 9153 / C-125) (Bacillus halodurans).